A 302-amino-acid polypeptide reads, in one-letter code: MDEKRLTHLRQLEAESIHIIREVAAEFGNPVMLYSIGKDSSVMLHLARKAFFPGNLPFPLLHVDTGWKFREMYEFRDHTAKAFGCELLVHRNPEGVAMGINPFVHGSAKHTDIMKTEGLKQALNKYGFDAAFGGARRDEEKSRAKERIYSFRDRFHRWDPKNQRPELWHNYNGQINKGESIRVFPLSNWTELDIWQYIFLEKIDIVPLYLAKPRPVVERDGMLLMVDDDRIDLQPGEVITQKMVRFRTLGCWPLTGAVESEAQTLPAIIEEMLISTTSERQGRMIDRDQSGSMELKKRQGYF.

This sequence belongs to the PAPS reductase family. CysD subfamily. In terms of assembly, heterodimer composed of CysD, the smaller subunit, and CysN.

It carries out the reaction sulfate + ATP + H(+) = adenosine 5'-phosphosulfate + diphosphate. It functions in the pathway sulfur metabolism; hydrogen sulfide biosynthesis; sulfite from sulfate: step 1/3. In terms of biological role, with CysN forms the ATP sulfurylase (ATPS) that catalyzes the adenylation of sulfate producing adenosine 5'-phosphosulfate (APS) and diphosphate, the first enzymatic step in sulfur assimilation pathway. APS synthesis involves the formation of a high-energy phosphoric-sulfuric acid anhydride bond driven by GTP hydrolysis by CysN coupled to ATP hydrolysis by CysD. The sequence is that of Sulfate adenylyltransferase subunit 2 from Yersinia enterocolitica serotype O:8 / biotype 1B (strain NCTC 13174 / 8081).